A 180-amino-acid polypeptide reads, in one-letter code: GTP cyclohydrolase 1 (180 aa).

3 residues coordinate Zn(2+): Cys71, His74, and Cys142.

Belongs to the GTP cyclohydrolase I family. Toroid-shaped homodecamer, composed of two pentamers of five dimers.

It carries out the reaction GTP + H2O = 7,8-dihydroneopterin 3'-triphosphate + formate + H(+). Its pathway is cofactor biosynthesis; 7,8-dihydroneopterin triphosphate biosynthesis; 7,8-dihydroneopterin triphosphate from GTP: step 1/1. In Helicobacter acinonychis (strain Sheeba), this protein is GTP cyclohydrolase 1.